We begin with the raw amino-acid sequence, 589 residues long: Phenylalanine--tRNA ligase beta subunit (589 aa).

In terms of domain architecture, B5 spans 302–377 (LEVREERISV…IAYGYNNIKK (76 aa)). Residues Asp355, Asp361, Glu364, and Asp365 each contribute to the Mg(2+) site.

The protein belongs to the phenylalanyl-tRNA synthetase beta subunit family. Type 2 subfamily. In terms of assembly, tetramer of two alpha and two beta subunits. It depends on Mg(2+) as a cofactor.

The protein resides in the cytoplasm. The catalysed reaction is tRNA(Phe) + L-phenylalanine + ATP = L-phenylalanyl-tRNA(Phe) + AMP + diphosphate + H(+). The protein is Phenylalanine--tRNA ligase beta subunit of Drosophila melanogaster (Fruit fly).